The primary structure comprises 888 residues: DNA mismatch repair protein MutS (888 aa).

641 to 648 (GPNMAGKS) is a binding site for ATP.

This sequence belongs to the DNA mismatch repair MutS family.

This protein is involved in the repair of mismatches in DNA. It is possible that it carries out the mismatch recognition step. This protein has a weak ATPase activity. The polypeptide is DNA mismatch repair protein MutS (Rickettsia bellii (strain RML369-C)).